Reading from the N-terminus, the 335-residue chain is DNA polymerase beta (335 aa).

Residue K41 forms a Glycyl lysine isopeptide (Lys-Gly) (interchain with G-Cter in ubiquitin) linkage. K60 is a binding site for K(+). Residue K60 participates in Na(+) binding. K61 participates in a covalent cross-link: Glycyl lysine isopeptide (Lys-Gly) (interchain with G-Cter in ubiquitin). L62 and V65 together coordinate K(+). L62 and V65 together coordinate Na(+). Catalysis depends on K72, which acts as the Nucleophile; Schiff-base intermediate with DNA; for 5'-dRP lyase activity. K72 carries the N6-acetyllysine modification. Residue K81 forms a Glycyl lysine isopeptide (Lys-Gly) (interchain with G-Cter in ubiquitin) linkage. Position 83 is an omega-N-methylarginine; by PRMT6 (R83). Residues T101, V103, and I106 each contribute to the K(+) site. Residues T101, V103, and I106 each coordinate Na(+). R149 contributes to the a 2'-deoxyribonucleoside 5'-triphosphate binding site. The residue at position 152 (R152) is an Omega-N-methylarginine; by PRMT6. 4 residues coordinate a 2'-deoxyribonucleoside 5'-triphosphate: S180, R183, G189, and D190. The segment at 183–192 (RGAESSGDMD) is DNA-binding. Residues D190, D192, and D256 each coordinate Mg(2+).

The protein belongs to the DNA polymerase type-X family. In terms of assembly, monomer. Binds single-stranded DNA (ssDNA). Interacts with APEX1, LIG1, LIG3, FEN1, PCNA and XRCC1. Interacts with HUWE1/ARF-BP1, STUB1/CHIP and USP47. Interacts with FAM168A. Requires Mg(2+) as cofactor. In terms of processing, methylation by PRMT6 stimulates the polymerase activity by enhancing DNA binding and processivity. Post-translationally, ubiquitinated at Lys-41, Lys-61 and Lys-81: monoubiquitinated by HUWE1/ARF-BP1. Monoubiquitinated protein is then the target of STUB1/CHIP, which catalyzes polyubiquitination from monoubiquitin, leading to degradation by the proteasome. USP47 mediates the deubiquitination of monoubiquitinated protein, preventing polyubiquitination by STUB1/CHIP and its subsequent degradation.

It localises to the nucleus. The protein resides in the cytoplasm. The enzyme catalyses DNA(n) + a 2'-deoxyribonucleoside 5'-triphosphate = DNA(n+1) + diphosphate. It catalyses the reaction a 5'-end 2'-deoxyribose-2'-deoxyribonucleotide-DNA = (2E,4S)-4-hydroxypenten-2-al-5-phosphate + a 5'-end 5'-phospho-2'-deoxyribonucleoside-DNA + H(+). It carries out the reaction 2'-deoxyribonucleotide-(2'-deoxyribose 5'-phosphate)-2'-deoxyribonucleotide-DNA = a 3'-end 2'-deoxyribonucleotide-(2,3-dehydro-2,3-deoxyribose 5'-phosphate)-DNA + a 5'-end 5'-phospho-2'-deoxyribonucleoside-DNA + H(+). In terms of biological role, repair polymerase that plays a key role in base-excision repair. During this process, the damaged base is excised by specific DNA glycosylases, the DNA backbone is nicked at the abasic site by an apurinic/apyrimidic (AP) endonuclease, and POLB removes 5'-deoxyribose-phosphate from the preincised AP site acting as a 5'-deoxyribose-phosphate lyase (5'-dRP lyase); through its DNA polymerase activity, it adds one nucleotide to the 3' end of the arising single-nucleotide gap. Conducts 'gap-filling' DNA synthesis in a stepwise distributive fashion rather than in a processive fashion as for other DNA polymerases. It is also able to cleave sugar-phosphate bonds 3' to an intact AP site, acting as an AP lyase. The chain is DNA polymerase beta (POLB) from Bos taurus (Bovine).